Here is a 251-residue protein sequence, read N- to C-terminus: Segregation and condensation protein A (251 aa).

This sequence belongs to the ScpA family. As to quaternary structure, component of a cohesin-like complex composed of ScpA, ScpB and the Smc homodimer, in which ScpA and ScpB bind to the head domain of Smc. The presence of the three proteins is required for the association of the complex with DNA.

Its subcellular location is the cytoplasm. Participates in chromosomal partition during cell division. May act via the formation of a condensin-like complex containing Smc and ScpB that pull DNA away from mid-cell into both cell halves. The protein is Segregation and condensation protein A of Exiguobacterium sibiricum (strain DSM 17290 / CCUG 55495 / CIP 109462 / JCM 13490 / 255-15).